A 548-amino-acid polypeptide reads, in one-letter code: Membrane protein insertase YidC (548 aa).

Residues 6 to 26 (NLLVIALLFVSFMIWQAWEQD) traverse the membrane as a helical segment. The disordered stretch occupies residues 28–55 (NPQPQAQQTTQTTTTAAGSAADQGVPAS). Over residues 30 to 50 (QPQAQQTTQTTTTAAGSAADQ) the composition is skewed to low complexity. A run of 4 helical transmembrane segments spans residues 350-370 (FVGNWGFSIIIITFIVRGIMY), 420-440 (LGGCFPLLIQMPIFLALYYML), 458-478 (LSAQDPYYILPILMGVTMFFI), and 499-519 (PVIFTVFFLWFPSGLVLYYIV).

This sequence belongs to the OXA1/ALB3/YidC family. Type 1 subfamily. As to quaternary structure, interacts with the Sec translocase complex via SecD. Specifically interacts with transmembrane segments of nascent integral membrane proteins during membrane integration.

The protein resides in the cell inner membrane. Its function is as follows. Required for the insertion and/or proper folding and/or complex formation of integral membrane proteins into the membrane. Involved in integration of membrane proteins that insert both dependently and independently of the Sec translocase complex, as well as at least some lipoproteins. Aids folding of multispanning membrane proteins. In Escherichia coli O139:H28 (strain E24377A / ETEC), this protein is Membrane protein insertase YidC.